We begin with the raw amino-acid sequence, 541 residues long: AT-rich interactive domain-containing protein 3A (541 aa).

Residues 17–172 (RLQQELEARQ…KHPNPQAFPT (156 aa)) form a disordered region. Positions 55-73 (LKIQRAQAAALAAMRAAAA) are enriched in low complexity. Residues 84 to 102 (SDEEEEDGESMASDEEDEK) are compositionally biased toward acidic residues. Residues 103 to 112 (ERDGESERYP) show a composition bias toward basic and acidic residues. Positions 115–144 (GSEEEDLKGKWDEDDFEDEGEEDDYEDMEE) are enriched in acidic residues. Residues 212 to 304 (DPKRKEFLDD…YLYPYECEKR (93 aa)) form the ARID domain. In terms of domain architecture, REKLES spans 407 to 501 (AALEQLREKL…GVLFAQPPTS (95 aa)). The tract at residues 408–450 (ALEQLREKLESGEPPEKKMALGTEEQQRLQRAIQHNLLAMTAQ) is important for nuclear localization. The tract at residues 452–473 (PMNIRINSQAEGRQDSAVNLTT) is homodimerization. An important for cytoplasmic localization region spans residues 497 to 504 (QPPTSASG). The segment at 499 to 541 (PTSASGTSKGSSNRTGSIGGGSSTSQAAPPPAPSAPTSNNPSP) is disordered.

As to quaternary structure, homodimer.

Its subcellular location is the nucleus. It is found in the cytoplasm. In terms of biological role, transcription factor required for smad1 and smad2-mediated responses to TGFbeta during mesoderm induction. This Xenopus tropicalis (Western clawed frog) protein is AT-rich interactive domain-containing protein 3A (arid3a).